The sequence spans 151 residues: Large ribosomal subunit protein bL9 (151 aa).

It belongs to the bacterial ribosomal protein bL9 family.

Binds to the 23S rRNA. This chain is Large ribosomal subunit protein bL9, found in Thermosipho africanus (strain TCF52B).